Consider the following 210-residue polypeptide: Thymidylate kinase (210 aa).

10–17 (GPEGAGKS) contacts ATP.

This sequence belongs to the thymidylate kinase family.

The enzyme catalyses dTMP + ATP = dTDP + ADP. In terms of biological role, phosphorylation of dTMP to form dTDP in both de novo and salvage pathways of dTTP synthesis. The polypeptide is Thymidylate kinase (Pseudomonas fluorescens (strain Pf0-1)).